A 37-amino-acid chain; its full sequence is M-oxotoxin-Ot2a (37 aa).

In terms of tissue distribution, expressed by the venom gland.

It is found in the secreted. Functionally, disrupts biological membranes, particularly those rich in phosphocholine. Has antimicrobial activity against Gram-negative bacterium E.coli, Gram-positive bacteria B.subtilis and S.aureus, and hemolytic activity against sheep, pig and guinea pig red blood cells. Has insecticidal activity against S.frugiperda ovarian cells by opening non-selective ion channels. Enhances the insecticidal activity of spider venom neurotoxic peptides. This is M-oxotoxin-Ot2a from Oxyopes takobius (Lynx spider).